Here is a 778-residue protein sequence, read N- to C-terminus: Ubiquitin thioesterase trabid (778 aa).

2 consecutive RanBP2-type zinc fingers follow at residues 5 to 36 (KDDA…SKPL) and 89 to 118 (DSEK…KRGG). A compositionally biased stretch (polar residues) spans 187–197 (ASHNQSQSQHR). The tract at residues 187 to 226 (ASHNQSQSQHRQPVLQQQMQLQLQPQQQRESSSSAAVPPQ) is disordered. Positions 198–226 (QPVLQQQMQLQLQPQQQRESSSSAAVPPQ) are enriched in low complexity. Residues 232–261 (YVSKWACNSCTYENWPRSIKCSMCGKTRER) form a RanBP2-type 3 zinc finger. A disordered region spans residues 265–290 (GSQNDLHASSSLNSQEENQQQLQQPN). The segment covering 273-288 (SSSLNSQEENQQQLQQ) has biased composition (low complexity). Positions 507-665 (MFVLWNRSAG…RGHFSALVPM (159 aa)) constitute an OTU domain. Residue Cys-518 is the Nucleophile of the active site. Residue His-658 is the Proton acceptor of the active site. 3 positions are modified to phosphoserine: Ser-770, Ser-771, and Ser-775.

This sequence belongs to the peptidase C64 family. Interacts with Apc.

The enzyme catalyses Thiol-dependent hydrolysis of ester, thioester, amide, peptide and isopeptide bonds formed by the C-terminal Gly of ubiquitin (a 76-residue protein attached to proteins as an intracellular targeting signal).. Its function is as follows. Positive regulator of the Wnt signaling pathway. Specifically cleaves 'Lys-63'-linked ubiquitin chains. May act by deubiquitinating APC protein, a negative regulator of Wnt-mediated transcription. Required for an efficient wg response, but not for other signaling responses, in the eye. The polypeptide is Ubiquitin thioesterase trabid (trbd) (Drosophila melanogaster (Fruit fly)).